The primary structure comprises 245 residues: 6-carboxyhexanoate--CoA ligase (245 aa).

This sequence belongs to the BioW family. Homodimer. The cofactor is Mg(2+).

The catalysed reaction is heptanedioate + ATP + CoA = 6-carboxyhexanoyl-CoA + AMP + diphosphate. It participates in metabolic intermediate metabolism; pimeloyl-CoA biosynthesis; pimeloyl-CoA from pimelate: step 1/1. In terms of biological role, catalyzes the transformation of pimelate into pimeloyl-CoA with concomitant hydrolysis of ATP to AMP. In Sulfurihydrogenibium sp. (strain YO3AOP1), this protein is 6-carboxyhexanoate--CoA ligase.